The sequence spans 131 residues: Small ribosomal subunit protein uS11 (131 aa).

It belongs to the universal ribosomal protein uS11 family. As to quaternary structure, part of the 30S ribosomal subunit.

Its function is as follows. Located on the platform of the 30S subunit. The polypeptide is Small ribosomal subunit protein uS11 (Methanospirillum hungatei JF-1 (strain ATCC 27890 / DSM 864 / NBRC 100397 / JF-1)).